The primary structure comprises 448 residues: Oxysterol-binding protein homolog 6 (448 aa).

Positions 1-42 are disordered; it reads MGSKKLTVGSDSHRLSKSSFSSNKSSHSATKDQPIDTDDIDE. Ser16 is modified (phosphoserine). Residues 17–28 are compositionally biased toward low complexity; it reads KSSFSSNKSSHS. Residues 54–391 are OSBP-related domain (ORD); sequence IISQLRPGCD…PGEDLDYCIY (338 aa). A 1,2-diacyl-sn-glycero-3-phospho-(1D-myo-inositol 4-phosphate) contacts are provided by residues 64 to 69, 126 to 129, and 157 to 158; these read LTRITL, KPLN, and HH. A 1,2-diacyl-sn-glycero-3-phospho-L-serine-binding positions include 64–69 and Asn129; that span reads LTRITL. An a 1,2-diacyl-sn-glycero-3-phospho-L-serine-binding site is contributed by Ser183. A 1,2-diacyl-sn-glycero-3-phospho-(1D-myo-inositol 4-phosphate) is bound by residues Lys351, Glu355, and Arg359.

It belongs to the OSBP family. In terms of assembly, interacts with the AAA ATPase VPS4; regulates OSH6 membrane association. VPS4 is required for membrane dissociation of OSH6.

Its subcellular location is the cytoplasm. The protein localises to the cell membrane. It localises to the endoplasmic reticulum membrane. The catalysed reaction is a 1,2-diacyl-sn-glycero-3-phospho-L-serine(in) = a 1,2-diacyl-sn-glycero-3-phospho-L-serine(out). Lipid transport protein (LTP) involved in non-vesicular transfer of lipids between membranes. Functions in phosphoinositide-coupled directional transport of various lipids by carrying the lipid molecule in a hydrophobic pocket and transferring it between membranes through the cytosol. Involved in maintenance of intracellular sterol distribution and homeostasis. Catalyzes the lipid countertransport between the endoplasmic reticulum (ER) and the plasma membrane (PM). Specifically exchanges phosphatidylserine (PS) with phosphatidylinositol 4-phosphate (PI4P), delivering phosphatidylserine to the PM in exchange for PI4P, which is delivered to the ER-localized PI4P phosphatase SAC1 for degradation. Thus, by maintaining a PI4P gradient at the ER/PM interface, SAC1 drives PS transport. Binds phosphatidylserine and PI4P in a mutually exclusive manner. Also binds phosphatidic acid (PA). This Saccharomyces cerevisiae (strain ATCC 204508 / S288c) (Baker's yeast) protein is Oxysterol-binding protein homolog 6.